A 384-amino-acid chain; its full sequence is NADH-quinone oxidoreductase subunit D 2 (384 aa).

The protein belongs to the complex I 49 kDa subunit family. As to quaternary structure, NDH-1 is composed of 14 different subunits. Subunits NuoB, C, D, E, F, and G constitute the peripheral sector of the complex.

It localises to the cell membrane. It carries out the reaction a quinone + NADH + 5 H(+)(in) = a quinol + NAD(+) + 4 H(+)(out). NDH-1 shuttles electrons from NADH, via FMN and iron-sulfur (Fe-S) centers, to quinones in the respiratory chain. The immediate electron acceptor for the enzyme in this species is believed to be a menaquinone. Couples the redox reaction to proton translocation (for every two electrons transferred, four hydrogen ions are translocated across the cytoplasmic membrane), and thus conserves the redox energy in a proton gradient. This Symbiobacterium thermophilum (strain DSM 24528 / JCM 14929 / IAM 14863 / T) protein is NADH-quinone oxidoreductase subunit D 2.